The sequence spans 751 residues: Cytosolic neutral trehalase (751 aa).

Residues 1–15 show a composition bias toward polar residues; the sequence is MDDSALPSNTSNGIN. Disordered regions lie at residues 1-42 and 64-88; these read MDDS…NPES and DFHEMLGDRNTRRGSMDPTSGNPRK. Residues 64-78 are compositionally biased toward basic and acidic residues; it reads DFHEMLGDRNTRRGS. Ca(2+)-binding residues include aspartate 105, aspartate 107, asparagine 109, glutamine 111, and aspartate 116. Substrate-binding positions include arginine 292, 299 to 300, asparagine 336, 345 to 347, glutamate 412, arginine 461, and glycine 464; these read WD and RSQ. Active-site proton donor/acceptor residues include aspartate 466 and glutamate 670.

It belongs to the glycosyl hydrolase 37 family. Requires Ca(2+) as cofactor.

Its subcellular location is the cytoplasm. It catalyses the reaction alpha,alpha-trehalose + H2O = alpha-D-glucose + beta-D-glucose. The protein operates within carbohydrate degradation. Activated by calcium. Hydrolyzes intracellular trehalose to glucose. The disaccharide trehalose serves as a storage carbohydrate that is mobilized during conidial germination. Regulates the level of trehalose as a protectant for cell integrity during heat stress. The polypeptide is Cytosolic neutral trehalase (Emericella nidulans (strain FGSC A4 / ATCC 38163 / CBS 112.46 / NRRL 194 / M139) (Aspergillus nidulans)).